The primary structure comprises 182 residues: MYPILVNSLLTCPIVKKGEYNYFVHPITDGIPDIDPGLLREIAVGMIRLLDLTDVKYIVTAEAMGIPIATAISLMTDIPVNIIRKRKYGLPGECDVCQVTGYSKGEMYINGICTGDRIVIVDDVISTGGTMNGIIKSLQSIGAEIADIGFVIKKGNPSLKLPYSYLVSIEVTDRVRIIDQSF.

It belongs to the purine/pyrimidine phosphoribosyltransferase family. Archaeal HPRT subfamily. As to quaternary structure, homodimer.

The protein resides in the cytoplasm. The catalysed reaction is IMP + diphosphate = hypoxanthine + 5-phospho-alpha-D-ribose 1-diphosphate. It carries out the reaction GMP + diphosphate = guanine + 5-phospho-alpha-D-ribose 1-diphosphate. It participates in purine metabolism; IMP biosynthesis via salvage pathway; IMP from hypoxanthine: step 1/1. In terms of biological role, catalyzes a salvage reaction resulting in the formation of IMP that is energically less costly than de novo synthesis. This chain is Hypoxanthine/guanine phosphoribosyltransferase, found in Methanospirillum hungatei JF-1 (strain ATCC 27890 / DSM 864 / NBRC 100397 / JF-1).